The chain runs to 889 residues: Chromatin structure-remodeling complex subunit RSC2 (889 aa).

One can recognise a Bromo 1 domain in the interval 12 to 120 (QNSSALYKDL…KYLKDTIYPN (109 aa)). Residues 151–268 (EKAEEVARAN…QVSRTQVKRG (118 aa)) are disordered. Positions 158–174 (RANAARAESSSSMNSTE) are enriched in low complexity. The segment covering 197–209 (NNDEDYEATDMDI) has biased composition (acidic residues). Residues 210–222 (DNPKDADFPDLIR) show a composition bias toward basic and acidic residues. Residues 241-250 (STTPSHSGTP) show a composition bias toward polar residues. Residues 255-268 (PRHRQVSRTQVKRG) show a composition bias toward basic residues. Positions 280–382 (RMKNVMKVLK…KTFTSLARFE (103 aa)) constitute a Bromo 2 domain. The region spanning 408–526 (ISYHVGDWAL…ESDKIFNKIR (119 aa)) is the BAH domain. A disordered region spans residues 601-624 (GEYATSDDCPRYIIRPNDSPEEGQ). Position 612 is a phosphotyrosine (Tyr-612). Ser-682 is modified (phosphoserine). The interval 831 to 865 (EVEETMEDVTGKDKDDDGLEPDVENEKESLPGPFV) is disordered.

This sequence belongs to the RSC1 family. As to quaternary structure, component of the two forms of the RSC complex composed of at least either RSC1 or RSC2, and ARP7, ARP9, LDB7, NPL6, RSC3, RSC30, RSC4, RSC58, RSC6, RSC8, RSC9, SFH1, STH1, HTL1 and probably RTT102. The complexes interact with histone and histone variant components of centromeric chromatin.

The protein resides in the nucleus. Component of the chromatin structure remodeling complex (RSC), which is involved in transcription regulation and nucleosome positioning. RSC is responsible for the transfer of a histone octamer from a nucleosome core particle to naked DNA. The reaction requires ATP and involves an activated RSC-nucleosome intermediate. Remodeling reaction also involves DNA translocation, DNA twist and conformational change. As a reconfigurer of centromeric and flanking nucleosomes, RSC complex is required both for proper kinetochore function in chromosome segregation and, via a PKC1-dependent signaling pathway, for organization of the cellular cytoskeleton. This subunit is involved in meiotic sporulation through regulating IME2 expression, and is also essential for 2-micron plasmid maintenance and for normal REP1 protein localization. This chain is Chromatin structure-remodeling complex subunit RSC2 (RSC2), found in Saccharomyces cerevisiae (strain ATCC 204508 / S288c) (Baker's yeast).